The sequence spans 214 residues: A-type ATP synthase subunit D (214 aa).

This sequence belongs to the V-ATPase D subunit family. Has multiple subunits with at least A(3), B(3), C, D, E, F, H, I and proteolipid K(x).

Its subcellular location is the cell membrane. Functionally, component of the A-type ATP synthase that produces ATP from ADP in the presence of a proton gradient across the membrane. The chain is A-type ATP synthase subunit D from Thermococcus kodakarensis (strain ATCC BAA-918 / JCM 12380 / KOD1) (Pyrococcus kodakaraensis (strain KOD1)).